The following is a 224-amino-acid chain: Small ribosomal subunit protein uS3c (224 aa).

The 82-residue stretch at 43–124 (IKNYIQKNRK…RLNIAIEKVK (82 aa)) folds into the KH type-2 domain.

This sequence belongs to the universal ribosomal protein uS3 family. Part of the 30S ribosomal subunit.

Its subcellular location is the plastid. It localises to the chloroplast. This chain is Small ribosomal subunit protein uS3c (rps3), found in Saccharum hybrid (Sugarcane).